The following is a 559-amino-acid chain: Potassium-transporting ATPase potassium-binding subunit (559 aa).

The next 13 helical transmembrane spans lie at 5–25 (GFLL…PLGS), 27–47 (LARL…RILW), 63–83 (LLAL…LLFW), 132–152 (GLTV…FALI), 170–190 (LVRI…LFFI), 253–273 (LAQM…FGEA), 283–303 (LLWA…WAEV), 327–347 (FGVL…CGAV), 356–376 (ALGG…FGGV), 379–399 (GLYG…LMIG), 416–436 (MTAL…ALAM), 484–504 (LLAF…MAIA), and 524–544 (GALF…LTFI).

This sequence belongs to the KdpA family. The system is composed of three essential subunits: KdpA, KdpB and KdpC.

It localises to the cell inner membrane. In terms of biological role, part of the high-affinity ATP-driven potassium transport (or Kdp) system, which catalyzes the hydrolysis of ATP coupled with the electrogenic transport of potassium into the cytoplasm. This subunit binds the periplasmic potassium ions and delivers the ions to the membrane domain of KdpB through an intramembrane tunnel. The sequence is that of Potassium-transporting ATPase potassium-binding subunit from Salmonella choleraesuis (strain SC-B67).